The following is a 466-amino-acid chain: Probable Xaa-Pro aminopeptidase pepP (466 aa).

The Mn(2+) site is built by D264, D275, E398, and E438.

This sequence belongs to the peptidase M24B family. The cofactor is Mn(2+).

The enzyme catalyses Release of any N-terminal amino acid, including proline, that is linked to proline, even from a dipeptide or tripeptide.. Functionally, catalyzes the removal of a penultimate prolyl residue from the N-termini of peptides. The protein is Probable Xaa-Pro aminopeptidase pepP (pepP) of Aspergillus niger (strain ATCC MYA-4892 / CBS 513.88 / FGSC A1513).